Consider the following 160-residue polypeptide: Protein TCP17 (160 aa).

Its subcellular location is the cytoplasm. This is Protein TCP17 from Trypanosoma cruzi.